Reading from the N-terminus, the 179-residue chain is Orotate phosphoribosyltransferase (179 aa).

5-phospho-alpha-D-ribose 1-diphosphate is bound by residues Arg94, Lys95, Lys98, His100, and Glu120–Ser128. Positions 124 and 152 each coordinate orotate.

It belongs to the purine/pyrimidine phosphoribosyltransferase family. PyrE subfamily. In terms of assembly, homodimer. Requires Mg(2+) as cofactor.

The enzyme catalyses orotidine 5'-phosphate + diphosphate = orotate + 5-phospho-alpha-D-ribose 1-diphosphate. The protein operates within pyrimidine metabolism; UMP biosynthesis via de novo pathway; UMP from orotate: step 1/2. In terms of biological role, catalyzes the transfer of a ribosyl phosphate group from 5-phosphoribose 1-diphosphate to orotate, leading to the formation of orotidine monophosphate (OMP). This is Orotate phosphoribosyltransferase from Mycobacterium avium (strain 104).